A 256-amino-acid polypeptide reads, in one-letter code: Ribosomal RNA small subunit methyltransferase J (256 aa).

S-adenosyl-L-methionine is bound by residues 101–102 (RD), 117–118 (ER), 153–154 (SS), and Asp-176.

This sequence belongs to the methyltransferase superfamily. RsmJ family.

It is found in the cytoplasm. It catalyses the reaction guanosine(1516) in 16S rRNA + S-adenosyl-L-methionine = N(2)-methylguanosine(1516) in 16S rRNA + S-adenosyl-L-homocysteine + H(+). In terms of biological role, specifically methylates the guanosine in position 1516 of 16S rRNA. The sequence is that of Ribosomal RNA small subunit methyltransferase J from Photobacterium profundum (strain SS9).